The primary structure comprises 87 residues: Small ribosomal subunit protein bS20 (87 aa).

Positions 1–15 are enriched in basic residues; that stretch reads MANTRSAKKMVRKIA. Disordered regions lie at residues 1–22 and 64–87; these read MANTRSAKKMVRKIAARTDVNK and KGVTHKNTASRKVSRLSARVKAMA.

It belongs to the bacterial ribosomal protein bS20 family.

Binds directly to 16S ribosomal RNA. This chain is Small ribosomal subunit protein bS20, found in Hyphomonas neptunium (strain ATCC 15444).